A 486-amino-acid polypeptide reads, in one-letter code: MSLFDHKISELHTLLQKKEISVSDLVDESFRRIGEVEEQVQAFLTLNEENARAKAKELDDKLAKEGNDFGVLFGMPIGIKDNIVTKGLRTTCASKILYNFDPIYDATVMERLNEAGAITIGKLNMDEFAMGSSTENSGFQLTRNPWDLERVPGGSSGGSAAAVAAGEVPFALGSDTGGSIRQPAAFCGVVGLKPTYGRVSRFGLVAFASSLDQIGPITRTVEDNAYLLQVIAGLDPMDSTSANVEVPNYVEALTGDIKGLKIAVPKEYLGEGVAEEVRQSVLDALKVLEKLGATWEEVSLPHSKYALATYYLLASSEASANLARFDGVRYGYRTDNAKNLIDMYKQTRSEGFGNEVKRRIMLGTFALSAGYYDAYYKKAQQVRTLIKQDFEKVFEKYDVIIGPTTPTPAFKIGEKTHDPLTMYANDILTIPVNLAGVPGISVPCGFVNGLPVGLQIIGKHFDESTIYRVAHAFEQATDYHKQKPAL.

Catalysis depends on charge relay system residues Lys80 and Ser155. The active-site Acyl-ester intermediate is the Ser179.

The protein belongs to the amidase family. GatA subfamily. In terms of assembly, heterotrimer of A, B and C subunits.

The catalysed reaction is L-glutamyl-tRNA(Gln) + L-glutamine + ATP + H2O = L-glutaminyl-tRNA(Gln) + L-glutamate + ADP + phosphate + H(+). Functionally, allows the formation of correctly charged Gln-tRNA(Gln) through the transamidation of misacylated Glu-tRNA(Gln) in organisms which lack glutaminyl-tRNA synthetase. The reaction takes place in the presence of glutamine and ATP through an activated gamma-phospho-Glu-tRNA(Gln). The chain is Glutamyl-tRNA(Gln) amidotransferase subunit A from Geobacillus sp. (strain WCH70).